The following is a 198-amino-acid chain: MEHYISLLVRSIFIENMALSFFLGMCTFLAVSKKVKTSFGLGIAVTVVLTISVPVNNLVYNLLLKPGALGENIDLTFLNFITFIGVIAALVQILEMILDRFFPPLYNALGIFLPLITVNCAIFGGVSFMVQRDYNFAESVVYGFGSGVGWMLAIVALAGIREKMKYSDVPPGLRGLGITFITAGLMALGFMSFSGVQL.

6 consecutive transmembrane segments (helical) span residues 11-31 (SIFI…FLAV), 39-59 (FGLG…NNLV), 77-97 (FLNF…LEMI), 110-130 (GIFL…SFMV), 140-160 (VVYG…LAGI), and 176-196 (LGIT…FSGV).

This sequence belongs to the NqrDE/RnfAE family. In terms of assembly, composed of six subunits; NqrA, NqrB, NqrC, NqrD, NqrE and NqrF.

Its subcellular location is the cell inner membrane. It carries out the reaction a ubiquinone + n Na(+)(in) + NADH + H(+) = a ubiquinol + n Na(+)(out) + NAD(+). NQR complex catalyzes the reduction of ubiquinone-1 to ubiquinol by two successive reactions, coupled with the transport of Na(+) ions from the cytoplasm to the periplasm. NqrA to NqrE are probably involved in the second step, the conversion of ubisemiquinone to ubiquinol. The protein is Na(+)-translocating NADH-quinone reductase subunit E of Vibrio anguillarum (Listonella anguillarum).